Reading from the N-terminus, the 128-residue chain is MSIEVGSKLQGKITGITNFGAFVELPGGSTGLVHISEVADNYVKDINDHLKVGDQVEVKVINVEKDGKIGLSIKKAKDRPQARPRNDFRPKESFEQKMNKFLKDSEDRLSSLKRNTESKRGGRGARRG.

The region spanning glycine 6–lysine 74 is the S1 motif domain. Residues serine 72 to glycine 128 form a disordered region. Residues aspartate 78–arginine 120 are compositionally biased toward basic and acidic residues.

Belongs to the peptidase U57 family.

This is an uncharacterized protein from Bacillus subtilis (strain 168).